The sequence spans 150 residues: Cytochrome c oxidase subunit 5A, mitochondrial (150 aa).

The transit peptide at 1-41 (MLGAALRRCAVAATSRAGPRGLLHSAPNPGPAAAIQSVRCY) directs the protein to the mitochondrion. The SIFI-degron signature appears at 2–17 (LGAALRRCAVAATSRA). N6-acetyllysine is present on residues Lys87 and Lys113. Thr141 carries the post-translational modification Phosphothreonine.

The protein belongs to the cytochrome c oxidase subunit 5A family. Component of the cytochrome c oxidase (complex IV, CIV), a multisubunit enzyme composed of 14 subunits. The complex is composed of a catalytic core of 3 subunits MT-CO1, MT-CO2 and MT-CO3, encoded in the mitochondrial DNA, and 11 supernumerary subunits COX4I, COX5A, COX5B, COX6A, COX6B, COX6C, COX7A, COX7B, COX7C, COX8 and NDUFA4, which are encoded in the nuclear genome. The complex exists as a monomer or a dimer and forms supercomplexes (SCs) in the inner mitochondrial membrane with NADH-ubiquinone oxidoreductase (complex I, CI) and ubiquinol-cytochrome c oxidoreductase (cytochrome b-c1 complex, complex III, CIII), resulting in different assemblies (supercomplex SCI(1)III(2)IV(1) and megacomplex MCI(2)III(2)IV(2)). Interacts with AFG1L. Interacts with RAB5IF. In response to mitochondrial stress, the precursor protein is ubiquitinated by the SIFI complex in the cytoplasm before mitochondrial import, leading to its degradation. Within the SIFI complex, UBR4 initiates ubiquitin chain that are further elongated or branched by KCMF1.

The protein resides in the mitochondrion inner membrane. It functions in the pathway energy metabolism; oxidative phosphorylation. Functionally, component of the cytochrome c oxidase, the last enzyme in the mitochondrial electron transport chain which drives oxidative phosphorylation. The respiratory chain contains 3 multisubunit complexes succinate dehydrogenase (complex II, CII), ubiquinol-cytochrome c oxidoreductase (cytochrome b-c1 complex, complex III, CIII) and cytochrome c oxidase (complex IV, CIV), that cooperate to transfer electrons derived from NADH and succinate to molecular oxygen, creating an electrochemical gradient over the inner membrane that drives transmembrane transport and the ATP synthase. Cytochrome c oxidase is the component of the respiratory chain that catalyzes the reduction of oxygen to water. Electrons originating from reduced cytochrome c in the intermembrane space (IMS) are transferred via the dinuclear copper A center (CU(A)) of subunit 2 and heme A of subunit 1 to the active site in subunit 1, a binuclear center (BNC) formed by heme A3 and copper B (CU(B)). The BNC reduces molecular oxygen to 2 water molecules using 4 electrons from cytochrome c in the IMS and 4 protons from the mitochondrial matrix. This chain is Cytochrome c oxidase subunit 5A, mitochondrial (COX5A), found in Saguinus labiatus (Red-chested mustached tamarin).